The following is a 473-amino-acid chain: 3-isopropylmalate dehydratase large subunit (473 aa).

The [4Fe-4S] cluster site is built by Cys351, Cys414, and Cys417.

This sequence belongs to the aconitase/IPM isomerase family. LeuC type 1 subfamily. Heterodimer of LeuC and LeuD. [4Fe-4S] cluster is required as a cofactor.

It catalyses the reaction (2R,3S)-3-isopropylmalate = (2S)-2-isopropylmalate. The protein operates within amino-acid biosynthesis; L-leucine biosynthesis; L-leucine from 3-methyl-2-oxobutanoate: step 2/4. Functionally, catalyzes the isomerization between 2-isopropylmalate and 3-isopropylmalate, via the formation of 2-isopropylmaleate. The polypeptide is 3-isopropylmalate dehydratase large subunit (Variovorax paradoxus (strain S110)).